We begin with the raw amino-acid sequence, 229 residues long: Deoxyribose-phosphate aldolase (229 aa).

Residue D84 is the Proton donor/acceptor of the active site. K146 acts as the Schiff-base intermediate with acetaldehyde in catalysis. K188 functions as the Proton donor/acceptor in the catalytic mechanism.

It belongs to the DeoC/FbaB aldolase family. DeoC type 1 subfamily.

It localises to the cytoplasm. The enzyme catalyses 2-deoxy-D-ribose 5-phosphate = D-glyceraldehyde 3-phosphate + acetaldehyde. The protein operates within carbohydrate degradation; 2-deoxy-D-ribose 1-phosphate degradation; D-glyceraldehyde 3-phosphate and acetaldehyde from 2-deoxy-alpha-D-ribose 1-phosphate: step 2/2. Its function is as follows. Catalyzes a reversible aldol reaction between acetaldehyde and D-glyceraldehyde 3-phosphate to generate 2-deoxy-D-ribose 5-phosphate. This Pyrobaculum neutrophilum (strain DSM 2338 / JCM 9278 / NBRC 100436 / V24Sta) (Thermoproteus neutrophilus) protein is Deoxyribose-phosphate aldolase.